The chain runs to 371 residues: Alanine dehydrogenase (371 aa).

The substrate site is built by arginine 15 and lysine 75. The active-site Proton donor/acceptor is the histidine 96. NAD(+) is bound by residues serine 134, aspartate 198, arginine 203, serine 220, 239-240 (VL), 267-270 (VAID), lysine 279, and 298-301 (VANM). Aspartate 270 acts as the Proton donor/acceptor in catalysis.

The protein belongs to the AlaDH/PNT family. Mg(2+) is required as a cofactor.

It catalyses the reaction L-alanine + NAD(+) + H2O = pyruvate + NH4(+) + NADH + H(+). It participates in amino-acid degradation; L-alanine degradation via dehydrogenase pathway; NH(3) and pyruvate from L-alanine: step 1/1. Functionally, catalyzes the reversible reductive amination of pyruvate to L-alanine. The protein is Alanine dehydrogenase of Halomonas elongata (strain ATCC 33173 / DSM 2581 / NBRC 15536 / NCIMB 2198 / 1H9).